The following is a 193-amino-acid chain: MLLSDRDILAAQADGHISLDPWTPEMVQPASIDVRLDRFFRLFNNHAYTYVDPAENQGELTEQFEVKPDEPWILHPGEFALGSTWEYVKLDASIAARLEGKSSLGRLGILTHSTAGFIDPGFEGHITLELSNVSTLPVKLWPGMKIGQMCFFQLSSPAEHPYGSATTGSHYQGQRGPTPSRSYVNFYKADITD.

DCTP-binding positions include 101 to 106 (KSSLGR), Asp-119, 127 to 129 (TLE), Gln-148, Tyr-162, and Gln-174. The Proton donor/acceptor role is filled by Glu-129.

Belongs to the dCTP deaminase family. Homotrimer.

The catalysed reaction is dCTP + 2 H2O = dUMP + NH4(+) + diphosphate. The protein operates within pyrimidine metabolism; dUMP biosynthesis; dUMP from dCTP: step 1/1. Functionally, bifunctional enzyme that catalyzes both the deamination of dCTP to dUTP and the hydrolysis of dUTP to dUMP without releasing the toxic dUTP intermediate. This Bifidobacterium adolescentis (strain ATCC 15703 / DSM 20083 / NCTC 11814 / E194a) protein is dCTP deaminase, dUMP-forming.